A 772-amino-acid polypeptide reads, in one-letter code: Chondroitin sulfate glucuronyltransferase (772 aa).

Residues 1–6 are Cytoplasmic-facing; sequence MRLSSL. Residues 7-29 traverse the membrane as a helical; Signal-anchor for type II membrane protein segment; sequence LALLRPALPLILGLSLGCSLSLL. Residues 30–772 lie on the Lumenal side of the membrane; that stretch reads RVSWIQGEGE…LFEQEQANST (743 aa). N-linked (GlcNAc...) asparagine glycans are attached at residues Asn-121 and Asn-342. The disordered stretch occupies residues 629 to 662; the sequence is ALSPQRSPPGPPGAGPDPPSPPGADPSRGAPIGG. The segment covering 634 to 652 has biased composition (pro residues); sequence RSPPGPPGAGPDPPSPPGA.

Belongs to the chondroitin N-acetylgalactosaminyltransferase family. Ubiquitous. Highly expressed in placenta, small intestine and pancreas.

The protein resides in the golgi apparatus. Its subcellular location is the golgi stack membrane. It carries out the reaction 3-O-(beta-D-GalNAc-(1-&gt;4)-beta-D-GlcA-(1-&gt;3)-beta-D-Gal-(1-&gt;3)-beta-D-Gal-(1-&gt;4)-beta-D-Xyl)-L-seryl-[protein] + UDP-alpha-D-glucuronate = 3-O-(beta-D-GlcA-(1-&gt;3)-beta-D-GalNAc-(1-&gt;4)-beta-D-GlcA-(1-&gt;3)-beta-D-Gal-(1-&gt;3)-beta-D-Gal-(1-&gt;4)-beta-D-Xyl)-L-seryl-[protein] + UDP + H(+). The enzyme catalyses 3-O-{[beta-D-GalNAc-(1-&gt;4)-beta-D-GlcA-(1-&gt;3)](n)-beta-D-GalNAc-(1-&gt;4)-beta-D-GlcA-(1-&gt;3)-beta-D-Gal-(1-&gt;3)-beta-D-Gal-(1-&gt;4)-beta-D-Xyl}-L-seryl-[protein] + UDP-alpha-D-glucuronate = 3-O-{beta-D-GlcA-(1-&gt;3)-[beta-D-GalNAc-(1-&gt;4)-beta-D-GlcA-(1-&gt;3)](n)-beta-D-GalNAc-(1-&gt;4)-beta-D-GlcA-(1-&gt;3)-beta-D-Gal-(1-&gt;3)-beta-D-Gal-(1-&gt;4)-beta-D-Xyl}-L-seryl-[protein] + UDP + H(+). Functionally, transfers glucuronic acid (GlcUA) from UDP-GlcUA to N-acetylgalactosamine residues on the non-reducing end of the elongating chondroitin polymer. Has no N-acetylgalactosaminyltransferase activity. This Homo sapiens (Human) protein is Chondroitin sulfate glucuronyltransferase (CHPF2).